The sequence spans 1140 residues: MGSSGSKSTTATTTSHSSTTTTSSTTSTTTPTTTSTTSTTSTKVTTSPEIIVSSSSTLVSSVVPEFTSSSSLSSDTIASILSSESLVSIFSSLSYTSSDISSTSVNDVESSTSGPSNSYSALSSTNAQLSSSTTETDSISSSAIQTSSPQTSSSNGGGSSSEPLGKSSVLETTASSSDTTAVTSSTFTTLTDVSSSPKISSSGSAVTSVGTTSDASKEVFSSSTSDVSSLLSSTSSPASSTISETLPFSSTILSITSSPVSSEAPSATSSVISSEASWATSSSVSSEAPLATSSVVSSEAPSSTSSVVSSEAPSSTSSSVSSEISSTTSSSVSSEAPLATSSVVSSEAPSSTSSSVSSEISSTTSSSVSSEAPLATSSVVSSEAPSSTSSSVSSEAPSSTSSSVSSEAPSSTSSSVSSEISSTKSSVMSSEVSSATSSLVSSEAPSAISSLASSRLFSSKNTSVTSTLVATEASSVTSSLRPSSETLASNSIIESSLSTGYNSTVSTTTSAASSTLGSKVSSSNSRMATSKTSSTSSDLSKSSVIFGNSSTVTTSPSASISLTASPLPSVWSDITSSEASSISSNLASSSAPSDNNSTIASASLIVTKTKNSVVSSIVSSITSSETTNESNLATSSTSLLSNKATARSLSTSNATSASNVPTGTFSSMSSHTSVITPGFSTSSASLAINSTVVSSSLAGYSFSTPESSPTTSTLVTSEAPSTVSSMTTSAPFINNSTSARPSPSTASFITESTSSISSVPLASGDVTSSLAAHNLTTFSAPSTSSAQLVSKSTTSSSILVTPRIDRSGNSSTASRIATSLPNKTTFVSSLSSTSAHARNIFNSTVLATAKQIETLTSTVNCSNPTPNYNITKTVIVSRETTAIGTVTSCSGGCTKNRKSTTLITITDIDASTVTTCPEKEVTSTTSGDEAEHTTSTKISNFETSTFSESFKDMKTSQETKKAKPGSETVRSSSSFVEKTSPTTKASPSTSPSESKAAGNTSVATNASPSTSPSESQGTGSTSVEGAKSKSTKNSEGVSTTKAKNTSTVAKSSTESPIGRGETTLETIIVSSQKSLLTSQLSSSTEKVNRSTTKPTAAIHGTSSSAKQSTTYTVSTAKENTGASLNINMKAFVIGAIALVA.

Disordered regions lie at residues 1 to 49 (MGSS…TSPE), 97 to 243 (SSDI…STIS), 280 to 427 (TSSS…KSSV), 512 to 541 (ASST…DLSK), 702 to 747 (FSTP…STAS), 916 to 1059 (CPEK…PIGR), and 1080 to 1103 (LSSS…GTSS). Residues 105-129 (VNDVESSTSGPSNSYSALSSTNAQL) are compositionally biased toward polar residues. Composition is skewed to low complexity over residues 130–154 (SSST…TSSS), 172–214 (TTAS…TTSD), and 221–243 (SSST…STIS). The span at 516–528 (LGSKVSSSNSRMA) shows a compositional bias: polar residues. 2 stretches are compositionally biased toward low complexity: residues 529 to 541 (TSKT…DLSK) and 703 to 718 (STPE…VTSE). The segment covering 719–733 (APSTVSSMTTSAPFI) has biased composition (polar residues). Low complexity predominate over residues 734-747 (NNSTSARPSPSTAS). The segment covering 949-961 (SFKDMKTSQETKK) has biased composition (basic and acidic residues). The segment covering 977-997 (EKTSPTTKASPSTSPSESKAA) has biased composition (low complexity). 3 stretches are compositionally biased toward polar residues: residues 998 to 1023 (GNTS…STSV), 1031 to 1055 (TKNS…STES), and 1089 to 1103 (RSTT…GTSS).

This is an uncharacterized protein from Saccharomyces cerevisiae (strain ATCC 204508 / S288c) (Baker's yeast).